A 751-amino-acid chain; its full sequence is Oxysterol-binding protein-related protein 11 (751 aa).

Met1 bears the N-acetylmethionine mark. Residues 1 to 57 form a disordered region; it reads MQGGEPASVMKVSESEGKLEGLATAVTPNKNSGNSSCGGAISSSSSNSSRGGSAKGW. Ser15 carries the post-translational modification Phosphoserine. Residue Thr27 is modified to Phosphothreonine. Residues 31 to 52 are compositionally biased toward low complexity; the sequence is NSGNSSCGGAISSSSSNSSRGG. The PH domain occupies 63-160; sequence MESVNGYLMK…WVSRLQICTQ (98 aa). Phosphoserine is present on residues Ser177, Ser179, Ser182, Ser186, Ser189, and Ser194. 2 disordered regions span residues 475 to 497 and 694 to 716; these read SGVSSSSSTPAITDHAPLPEEAP and EIDKATEHKRSLEERQRTEERLR.

It belongs to the OSBP family. As to quaternary structure, heterodimer with OSBPL9.

Its subcellular location is the late endosome membrane. The protein localises to the golgi apparatus. It is found in the trans-Golgi network membrane. The enzyme catalyses a 1,2-diacyl-sn-glycero-3-phospho-(1D-myo-inositol 4-phosphate)(out) + a 1,2-diacyl-sn-glycero-3-phospho-L-serine(in) = a 1,2-diacyl-sn-glycero-3-phospho-(1D-myo-inositol 4-phosphate)(in) + a 1,2-diacyl-sn-glycero-3-phospho-L-serine(out). Its function is as follows. Plays a role in regulating ADIPOQ and FABP4 levels in differentiating adipocytes and is also involved in regulation of adipocyte triglyceride storage. Weakly binds 25-hydroxycholesterol. Interacts with OSBPL9 to function as lipid transfer proteins. Together they form a heterodimer that localizes at the ER-trans-Golgi membrane contact sites, and exchanges phosphatidylserine (1,2-diacyl-sn-glycero-3-phospho-L-serine, PS) for phosphatidylinositol-4-phosphate (1,2-diacyl-sn-glycero-3-phospho-(1D-myo-inositol 4-phosphate), PI(4)P) between the two organelles, a step that is critical for sphingomyelin synthesis in the Golgi complex. The chain is Oxysterol-binding protein-related protein 11 (Osbpl11) from Mus musculus (Mouse).